Here is a 243-residue protein sequence, read N- to C-terminus: I/6 autoantigen (243 aa).

One can recognise an EF-hand domain in the interval 110–145 (LSVEEVDALFNALDSDNRGYVSVDEFMDALYGEEGR). The segment at 166 to 243 (PSWRMRPTPK…PPKQKAGCGC (78 aa)) is disordered. Residues 176–196 (PTRKLRQKRKREQGQKRKQGQ) show a composition bias toward basic residues. A run of 6 repeats spans residues 181–188 (RQKRKREQ), 189–196 (GQKRKQGQ), 197–204 (RQKQEQGQ), 205–212 (RQKREQGQ), 213–220 (RQKQEQGQ), and 221–228 (KRKRERGG). Residues 181–228 (RQKRKREQGQKRKQGQRQKQEQGQRQKREQGQRQKQEQGQKRKRERGG) form a 6 X 8 AA tandem repeats region. A compositionally biased stretch (basic and acidic residues) spans 198 to 220 (QKQEQGQRQKREQGQRQKQEQGQ).

It is found in the cytoplasm. The protein resides in the cytoskeleton. Its function is as follows. Microtubule-associated protein that may be involved in cross-linking microtubules. This chain is I/6 autoantigen, found in Trypanosoma brucei brucei.